A 218-amino-acid polypeptide reads, in one-letter code: Thiamine-phosphate synthase (218 aa).

Residues 45–49 (QYREK) and N77 each bind 4-amino-2-methyl-5-(diphosphooxymethyl)pyrimidine. Mg(2+) contacts are provided by D78 and D97. S116 provides a ligand contact to 4-amino-2-methyl-5-(diphosphooxymethyl)pyrimidine. 142–144 (TKT) is a 2-[(2R,5Z)-2-carboxy-4-methylthiazol-5(2H)-ylidene]ethyl phosphate binding site. K145 is a binding site for 4-amino-2-methyl-5-(diphosphooxymethyl)pyrimidine. 2-[(2R,5Z)-2-carboxy-4-methylthiazol-5(2H)-ylidene]ethyl phosphate-binding positions include G173 and 193 to 194 (VT).

The protein belongs to the thiamine-phosphate synthase family. It depends on Mg(2+) as a cofactor.

The catalysed reaction is 2-[(2R,5Z)-2-carboxy-4-methylthiazol-5(2H)-ylidene]ethyl phosphate + 4-amino-2-methyl-5-(diphosphooxymethyl)pyrimidine + 2 H(+) = thiamine phosphate + CO2 + diphosphate. It catalyses the reaction 2-(2-carboxy-4-methylthiazol-5-yl)ethyl phosphate + 4-amino-2-methyl-5-(diphosphooxymethyl)pyrimidine + 2 H(+) = thiamine phosphate + CO2 + diphosphate. It carries out the reaction 4-methyl-5-(2-phosphooxyethyl)-thiazole + 4-amino-2-methyl-5-(diphosphooxymethyl)pyrimidine + H(+) = thiamine phosphate + diphosphate. The protein operates within cofactor biosynthesis; thiamine diphosphate biosynthesis; thiamine phosphate from 4-amino-2-methyl-5-diphosphomethylpyrimidine and 4-methyl-5-(2-phosphoethyl)-thiazole: step 1/1. In terms of biological role, condenses 4-methyl-5-(beta-hydroxyethyl)thiazole monophosphate (THZ-P) and 2-methyl-4-amino-5-hydroxymethyl pyrimidine pyrophosphate (HMP-PP) to form thiamine monophosphate (TMP). The chain is Thiamine-phosphate synthase from Pelotomaculum thermopropionicum (strain DSM 13744 / JCM 10971 / SI).